Here is a 250-residue protein sequence, read N- to C-terminus: 2,3-bisphosphoglycerate-dependent phosphoglycerate mutase (250 aa).

Substrate is bound by residues 10-17, 23-24, R62, 89-92, K100, 116-117, and 185-186; these read RHGESQWN, TG, ERHY, RR, and GN. Catalysis depends on H11, which acts as the Tele-phosphohistidine intermediate. The Proton donor/acceptor role is filled by E89.

It belongs to the phosphoglycerate mutase family. BPG-dependent PGAM subfamily. In terms of assembly, homodimer.

It carries out the reaction (2R)-2-phosphoglycerate = (2R)-3-phosphoglycerate. It functions in the pathway carbohydrate degradation; glycolysis; pyruvate from D-glyceraldehyde 3-phosphate: step 3/5. Its function is as follows. Catalyzes the interconversion of 2-phosphoglycerate and 3-phosphoglycerate. The sequence is that of 2,3-bisphosphoglycerate-dependent phosphoglycerate mutase from Salmonella agona (strain SL483).